Consider the following 186-residue polypeptide: GTP-dependent dephospho-CoA kinase (186 aa).

GTP contacts are provided by Asp-43, Ile-44, Val-45, Asp-62, Glu-120, and Asp-143.

This sequence belongs to the GTP-dependent DPCK family.

The catalysed reaction is 3'-dephospho-CoA + GTP = GDP + CoA + H(+). It participates in cofactor biosynthesis; coenzyme A biosynthesis. Its function is as follows. Catalyzes the GTP-dependent phosphorylation of the 3'-hydroxyl group of dephosphocoenzyme A to form coenzyme A (CoA). The polypeptide is GTP-dependent dephospho-CoA kinase (Haloquadratum walsbyi (strain DSM 16790 / HBSQ001)).